Consider the following 880-residue polypeptide: Probable potassium channel AKT5 (880 aa).

Topologically, residues 1 to 82 are cytoplasmic; sequence MGIEKRKKMV…PFDPRYRAWD (82 aa). A helical membrane pass occupies residues 83–103; it reads WFLVILVLYTAWASPFEFGFL. The Extracellular segment spans residues 104–111; the sequence is QTPRAPLS. The chain crosses the membrane as a helical span at residues 112–132; sequence ILDNVVNGFFAVDIVLTFFVA. At 133–153 the chain is on the cytoplasmic side; it reads FLDKATYLLVDDPKRIAWRYT. A helical membrane pass occupies residues 154 to 174; sequence STWLIFDVVSTVPYELFGSLL. The Extracellular segment spans residues 175–182; sequence HNTIQGYG. A helical; Voltage-sensor transmembrane segment spans residues 183 to 203; that stretch reads IFSMLRLWRLHRVSKCFARLE. The Cytoplasmic segment spans residues 204–217; it reads KDRKYNYFWIRCTK. Residues 218–238 traverse the membrane as a helical segment; the sequence is LLLVSLFVVHCGACFCYSIAA. Over 239–265 the chain is Extracellular; the sequence is HYPDPSMTFMALAEANWKQKSLLIRYV. Residues 266–285 constitute an intramembrane region (pore-forming); that stretch reads TAMYWSITTFSTTGYGDIHG. Topologically, residues 286–291 are extracellular; the sequence is NNAEER. A helical transmembrane segment spans residues 292-312; it reads AFILFYMIFNLGLLAYIIGNM. The Cytoplasmic portion of the chain corresponds to 313 to 880; the sequence is TNLVVHVTSR…GDFLLLLKVS (568 aa). 396-517 is an a nucleoside 3',5'-cyclic phosphate binding site; that stretch reads LFHGISNDLL…IMNNLLQHLK (122 aa). 5 ANK repeats span residues 541–570, 574–603, 607–636, 637–667, and 671–700; these read DLPL…NPNE, NGRT…DPNI, EGSV…TLSF, DTVG…DISL, and NGTT…DMDK. Residues 809–880 enclose the KHA domain; it reads VGGVYPARVT…GDFLLLLKVS (72 aa).

The protein belongs to the potassium channel family. Plant (TC 1.A.1.4) subfamily. As to quaternary structure, the potassium channel is probably composed of a homo- or heterotetrameric complex of pore-forming subunits. As to expression, predominantly expressed in flowers.

It localises to the membrane. In terms of biological role, probable potassium channel. May interact with the cytoskeleton or with regulatory proteins. In Arabidopsis thaliana (Mouse-ear cress), this protein is Probable potassium channel AKT5 (AKT5).